Reading from the N-terminus, the 26-residue chain is Turripeptide OL49 (26 aa).

In terms of processing, contains 3 disulfide bonds. Expressed by the venom duct.

Its subcellular location is the secreted. Functionally, acts as a neurotoxin by inhibiting an ion channel. This is Turripeptide OL49 from Iotyrris olangoensis (Sea snail).